Reading from the N-terminus, the 126-residue chain is uncharacterized protein (126 aa).

The interval 1–46 (MREEEAAAVVTVPQAGRDGEQPGPPAGLGCAAVRGEPGGGGPQESR) is disordered.

Its subcellular location is the cytoplasm. The protein localises to the cytoskeleton. The protein resides in the cilium basal body. This is an uncharacterized protein from Bos taurus (Bovine).